The chain runs to 367 residues: MEAERQNQLVARLEDYAEREQALRRYLDYDAKSERLQVVNAELEDPAIWNDPKHAQDLGREKKSLEDVVETLTELGSGLADSCELVELALADSDDATLEAIEHDADRFQEKLETLEFRRMFANPADPLNCFVDIQAGAGGTEAQDWASMLLRQYLKYAERKGFKAEILEESEGDVAGLKSATIKIEGEYAFGYLRTETGVHRLVRKSPFDSSGGRHTSFASVFVYPEVDESFEVEVNPADLRIDTYRASGAGGQHINKTDSAVRITHAPSGIVVQCQNDRSQHRNRAEAMQMLKSKLYELEMRNRMTEQQKLEDSKTDVGWGHQIRSYVLDQSRIKDLRTNVEISNTQKVLDGDLDPFIQASLKQGV.

Glutamine 254 is subject to N5-methylglutamine.

This sequence belongs to the prokaryotic/mitochondrial release factor family. Post-translationally, methylated by PrmC. Methylation increases the termination efficiency of RF2.

The protein localises to the cytoplasm. Functionally, peptide chain release factor 2 directs the termination of translation in response to the peptide chain termination codons UGA and UAA. The chain is Peptide chain release factor 2 from Bordetella bronchiseptica (strain ATCC BAA-588 / NCTC 13252 / RB50) (Alcaligenes bronchisepticus).